The primary structure comprises 196 residues: FMN-dependent NADH:quinone oxidoreductase (196 aa).

FMN-binding positions include Ser10 and 17 to 19 (SYS).

The protein belongs to the azoreductase type 1 family. In terms of assembly, homodimer. The cofactor is FMN.

The catalysed reaction is 2 a quinone + NADH + H(+) = 2 a 1,4-benzosemiquinone + NAD(+). The enzyme catalyses N,N-dimethyl-1,4-phenylenediamine + anthranilate + 2 NAD(+) = 2-(4-dimethylaminophenyl)diazenylbenzoate + 2 NADH + 2 H(+). In terms of biological role, quinone reductase that provides resistance to thiol-specific stress caused by electrophilic quinones. Its function is as follows. Also exhibits azoreductase activity. Catalyzes the reductive cleavage of the azo bond in aromatic azo compounds to the corresponding amines. This chain is FMN-dependent NADH:quinone oxidoreductase, found in Metamycoplasma arthritidis (strain 158L3-1) (Mycoplasma arthritidis).